The sequence spans 483 residues: Linamarin synthase 1 (483 aa).

The active-site Proton acceptor is His22. His22 is a binding site for an anthocyanidin. Asp124 (charge relay) is an active-site residue. Residues Thr146, Val360, Gln362, His377, Trp380, Asn381, Ser382, and Glu385 each contribute to the UDP-alpha-D-glucose site. An an anthocyanidin-binding site is contributed by Ala400. Residues Glu401 and Gln402 each coordinate UDP-alpha-D-glucose.

Belongs to the UDP-glycosyltransferase family. As to expression, expressed in the cortex, xylem and phloem parenchyma, and in specific cells in the endodermis of the petiole of the first unfolded leaf.

It carries out the reaction 2-hydroxy-2-methylpropanenitrile + UDP-alpha-D-glucose = linamarin + UDP + H(+). In terms of biological role, UDP-glucosyltransferase catalyzing in planta synthesis of cyanogenic glucosides. Able to glucosylate acetone cyanohydrin and 2-hydroxy-2-methylbutyronitrile, forming linamarin and lotaustralin. Also accepts, to some extent, a wide range of potential acceptor substrates, including simple alcohols, flavonoids, isoflavonoids and other hydroxynitriles such as p-hydroxymandelonitrile, mandelonitrile, (E)-4-hydroxy-2-methylbut-2-enenitrile and (E)- 2-(hydroxymethyl)but-2-enenitrile. The chain is Linamarin synthase 1 from Manihot esculenta (Cassava).